A 190-amino-acid polypeptide reads, in one-letter code: dCTP deaminase (190 aa).

Lys113–Arg118 is a dCTP binding site. The active-site Proton donor/acceptor is Glu139. 4 residues coordinate dCTP: Gln158, Tyr172, Lys181, and Gln182.

It belongs to the dCTP deaminase family. Homotrimer.

The enzyme catalyses dCTP + H2O + H(+) = dUTP + NH4(+). Its pathway is pyrimidine metabolism; dUMP biosynthesis; dUMP from dCTP (dUTP route): step 1/2. Its function is as follows. Catalyzes the deamination of dCTP to dUTP. The polypeptide is dCTP deaminase (Chlamydia trachomatis serovar L2 (strain ATCC VR-902B / DSM 19102 / 434/Bu)).